We begin with the raw amino-acid sequence, 65 residues long: Large ribosomal subunit protein eL24 (65 aa).

The Zn(2+) site is built by C6, C9, C32, and C36. The segment at 6-36 adopts a C4-type zinc-finger fold; it reads CAFCGADIPPGYGIMYVKSDGTVLRYCSRKC.

This sequence belongs to the eukaryotic ribosomal protein eL24 family. Part of the 50S ribosomal subunit. Forms a cluster with proteins L3 and L14. It depends on Zn(2+) as a cofactor.

Functionally, binds to the 23S rRNA. The polypeptide is Large ribosomal subunit protein eL24 (Pyrobaculum arsenaticum (strain DSM 13514 / JCM 11321 / PZ6)).